A 341-amino-acid polypeptide reads, in one-letter code: Uroporphyrinogen decarboxylase (341 aa).

Substrate-binding positions include 26 to 30, D75, Y150, S205, and H318; that span reads RQAGR.

Belongs to the uroporphyrinogen decarboxylase family. As to quaternary structure, homodimer.

Its subcellular location is the cytoplasm. The catalysed reaction is uroporphyrinogen III + 4 H(+) = coproporphyrinogen III + 4 CO2. The protein operates within porphyrin-containing compound metabolism; protoporphyrin-IX biosynthesis; coproporphyrinogen-III from 5-aminolevulinate: step 4/4. Catalyzes the decarboxylation of four acetate groups of uroporphyrinogen-III to yield coproporphyrinogen-III. The polypeptide is Uroporphyrinogen decarboxylase (Thermus thermophilus (strain ATCC 27634 / DSM 579 / HB8)).